Here is a 291-residue protein sequence, read N- to C-terminus: 4-diphosphocytidyl-2-C-methyl-D-erythritol kinase (291 aa).

The active site involves Lys-14. 96-106 (PFGAGLGGGSS) contacts ATP. Asp-138 is a catalytic residue.

This sequence belongs to the GHMP kinase family. IspE subfamily.

It catalyses the reaction 4-CDP-2-C-methyl-D-erythritol + ATP = 4-CDP-2-C-methyl-D-erythritol 2-phosphate + ADP + H(+). It functions in the pathway isoprenoid biosynthesis; isopentenyl diphosphate biosynthesis via DXP pathway; isopentenyl diphosphate from 1-deoxy-D-xylulose 5-phosphate: step 3/6. Catalyzes the phosphorylation of the position 2 hydroxy group of 4-diphosphocytidyl-2C-methyl-D-erythritol. The polypeptide is 4-diphosphocytidyl-2-C-methyl-D-erythritol kinase (Chlorobium phaeovibrioides (strain DSM 265 / 1930) (Prosthecochloris vibrioformis (strain DSM 265))).